The sequence spans 245 residues: Uridylate kinase (245 aa).

15–18 (KLSG) contacts ATP. The involved in allosteric activation by GTP stretch occupies residues 23 to 28 (GDEGFG). A UMP-binding site is contributed by G57. Residues G58 and R62 each coordinate ATP. UMP is bound by residues D77 and 138–145 (TGNPFCTT). Positions 165, 171, and 174 each coordinate ATP.

The protein belongs to the UMP kinase family. In terms of assembly, homohexamer.

Its subcellular location is the cytoplasm. It carries out the reaction UMP + ATP = UDP + ADP. It participates in pyrimidine metabolism; CTP biosynthesis via de novo pathway; UDP from UMP (UMPK route): step 1/1. Its activity is regulated as follows. Allosterically activated by GTP. Inhibited by UTP. Its function is as follows. Catalyzes the reversible phosphorylation of UMP to UDP. In Shewanella baltica (strain OS155 / ATCC BAA-1091), this protein is Uridylate kinase.